The chain runs to 99 residues: Aspartyl/glutamyl-tRNA(Asn/Gln) amidotransferase subunit C (99 aa).

This sequence belongs to the GatC family. In terms of assembly, heterotrimer of A, B and C subunits.

The catalysed reaction is L-glutamyl-tRNA(Gln) + L-glutamine + ATP + H2O = L-glutaminyl-tRNA(Gln) + L-glutamate + ADP + phosphate + H(+). It catalyses the reaction L-aspartyl-tRNA(Asn) + L-glutamine + ATP + H2O = L-asparaginyl-tRNA(Asn) + L-glutamate + ADP + phosphate + 2 H(+). In terms of biological role, allows the formation of correctly charged Asn-tRNA(Asn) or Gln-tRNA(Gln) through the transamidation of misacylated Asp-tRNA(Asn) or Glu-tRNA(Gln) in organisms which lack either or both of asparaginyl-tRNA or glutaminyl-tRNA synthetases. The reaction takes place in the presence of glutamine and ATP through an activated phospho-Asp-tRNA(Asn) or phospho-Glu-tRNA(Gln). In Delftia acidovorans (strain DSM 14801 / SPH-1), this protein is Aspartyl/glutamyl-tRNA(Asn/Gln) amidotransferase subunit C.